Here is an 82-residue protein sequence, read N- to C-terminus: Delta-conotoxin-like SmVIA (82 aa).

Positions 1–22 (MKLTCVMIVAVLFLIAWTFVTA) are cleaved as a signal peptide. Positions 23-49 (DDSRNGLKNLFPKARHEMKNPEASKLN) are excised as a propeptide. 3 cysteine pairs are disulfide-bonded: C54/C69, C61/C73, and C68/C77. Residue P65 is modified to 4-hydroxyproline.

It belongs to the conotoxin O1 superfamily. As to expression, expressed by the venom duct.

The protein localises to the secreted. Functionally, delta-conotoxins bind to site 6 of voltage-gated sodium channels (Nav) and inhibit the inactivation process. The chain is Delta-conotoxin-like SmVIA from Conus stercusmuscarum (Fly-specked cone).